Consider the following 72-residue polypeptide: SRY-related protein ADW4 (72 aa).

Positions 1-69 (VKRPMNAFMV…KHMADYPNYK (69 aa)) form a DNA-binding region, HMG box.

The protein resides in the nucleus. In Alligator mississippiensis (American alligator), this protein is SRY-related protein ADW4.